Reading from the N-terminus, the 639-residue chain is 3D-(3,5/4)-trihydroxycyclohexane-1,2-dione hydrolase (639 aa).

Glu-62 contacts thiamine diphosphate. The thiamine pyrophosphate binding stretch occupies residues 438 to 518 (SLPGDLQRMW…INILLFDNCG (81 aa)). Mg(2+) contacts are provided by Asp-489 and Asn-516.

Belongs to the TPP enzyme family. Requires Mg(2+) as cofactor. Thiamine diphosphate is required as a cofactor.

The catalysed reaction is 3D-3,5/4-trihydroxycyclohexane-1,2-dione + H2O = 5-deoxy-D-glucuronate + H(+). The protein operates within polyol metabolism; myo-inositol degradation into acetyl-CoA; acetyl-CoA from myo-inositol: step 3/7. Involved in the cleavage of the C1-C2 bond of 3D-(3,5/4)-trihydroxycyclohexane-1,2-dione (THcHDO) to yield 5-deoxy-glucuronate (5DG). This Clostridium perfringens (strain 13 / Type A) protein is 3D-(3,5/4)-trihydroxycyclohexane-1,2-dione hydrolase.